Here is a 310-residue protein sequence, read N- to C-terminus: tRNA dimethylallyltransferase (310 aa).

9 to 16 (GPTAVGKT) is a binding site for ATP. 11 to 16 (TAVGKT) contributes to the substrate binding site. The interval 34-37 (DSMQ) is interaction with substrate tRNA.

Belongs to the IPP transferase family. As to quaternary structure, monomer. Mg(2+) is required as a cofactor.

It catalyses the reaction adenosine(37) in tRNA + dimethylallyl diphosphate = N(6)-dimethylallyladenosine(37) in tRNA + diphosphate. Functionally, catalyzes the transfer of a dimethylallyl group onto the adenine at position 37 in tRNAs that read codons beginning with uridine, leading to the formation of N6-(dimethylallyl)adenosine (i(6)A). The protein is tRNA dimethylallyltransferase of Pediococcus pentosaceus (strain ATCC 25745 / CCUG 21536 / LMG 10740 / 183-1w).